Consider the following 225-residue polypeptide: Uridine kinase (225 aa).

ATP is bound at residue 12–19 (GGTGAGKT).

The protein belongs to the uridine kinase family.

Its subcellular location is the cytoplasm. It catalyses the reaction uridine + ATP = UMP + ADP + H(+). It carries out the reaction cytidine + ATP = CMP + ADP + H(+). Its pathway is pyrimidine metabolism; CTP biosynthesis via salvage pathway; CTP from cytidine: step 1/3. It functions in the pathway pyrimidine metabolism; UMP biosynthesis via salvage pathway; UMP from uridine: step 1/1. The chain is Uridine kinase from Halobacterium salinarum (strain ATCC 700922 / JCM 11081 / NRC-1) (Halobacterium halobium).